A 466-amino-acid polypeptide reads, in one-letter code: Phosphomethylpyrimidine synthase (466 aa).

Substrate is bound by residues N80, M109, Y139, H175, 195-197 (SRG), 236-239 (DSLR), and E275. H279 provides a ligand contact to Zn(2+). Y302 contributes to the substrate binding site. A Zn(2+)-binding site is contributed by H343. Residues C423, C426, and C431 each coordinate [4Fe-4S] cluster.

The protein belongs to the ThiC family. [4Fe-4S] cluster serves as cofactor.

It carries out the reaction 5-amino-1-(5-phospho-beta-D-ribosyl)imidazole + S-adenosyl-L-methionine = 4-amino-2-methyl-5-(phosphooxymethyl)pyrimidine + CO + 5'-deoxyadenosine + formate + L-methionine + 3 H(+). Its pathway is cofactor biosynthesis; thiamine diphosphate biosynthesis. Its function is as follows. Catalyzes the synthesis of the hydroxymethylpyrimidine phosphate (HMP-P) moiety of thiamine from aminoimidazole ribotide (AIR) in a radical S-adenosyl-L-methionine (SAM)-dependent reaction. In Synechococcus sp. (strain CC9902), this protein is Phosphomethylpyrimidine synthase.